A 788-amino-acid chain; its full sequence is Response regulator SSK1 (788 aa).

Residues 534–691 (NVLIVEDNII…WLERKVKEWG (158 aa)) enclose the Response regulatory domain. A 4-aspartylphosphate modification is found at aspartate 583.

This sequence belongs to the SSK1 family.

Its subcellular location is the cytoplasm. Two-domain response regulator protein in the two-component signal transduction system of the HOG1 pathway. Controls high-osmolarity adaptation and fungicide sensitivity via its regulation of the phosphorylation of HOG1. This chain is Response regulator SSK1, found in Cochliobolus heterostrophus (strain C5 / ATCC 48332 / race O) (Southern corn leaf blight fungus).